The sequence spans 81 residues: U-megalopygitoxin(3)-Mo4 (81 aa).

The signal sequence occupies residues 1–20; that stretch reads MNSKFVLIVVFLAVVSICFA.

This sequence belongs to the caterpillar 3 family. Contains 3 disulfide bonds. Expressed by the venom apparatus.

It is found in the secreted. Functionally, probable toxin. This chain is U-megalopygitoxin(3)-Mo4, found in Megalopyge opercularis (Southern flannel moth).